A 398-amino-acid chain; its full sequence is MTGKLYGNKDNFRTQKVLIAAKLANKTVTLAGDAAPADKFPLGVTPAFEGDALLFGAESIGLHLTGTSANAETVQWLQFAEGYLLPAVLGYVLPSVSAANFDKKTVEQYKNELNGQLQVLDRVLVKKTYLVGERLSLADVSVALDLLPAFQYVLDANARKSIVNVTRWFRTVVNQPAVKEVLGEVSLASSVAQFNQAKFTELSAKVAKSAPKAEKPKKEAKPAAAAAQPEDDEPKEEKSKDPFQDMPKGTFVLDNFKRSYSNEDTATKAIPHFWENFDADNWSIWKCEYKYPEDLTLAFMSCNLINGMYQRLEKLKKNAFASMILFGTDNNSTISGIWVWKGDKLAFELSPDWQVDYESYTWTKLDAKSDATKKEVNEYLMWEGDFGGKKFNQGKIFK.

Residues 66-199 enclose the GST C-terminal domain; sequence GTSANAETVQ…SVAQFNQAKF (134 aa). Residues 210–248 are disordered; the sequence is APKAEKPKKEAKPAAAAAQPEDDEPKEEKSKDPFQDMPK. A compositionally biased stretch (basic and acidic residues) spans 211 to 221; the sequence is PKAEKPKKEAK. In terms of domain architecture, EF-1-gamma C-terminal spans 239–398; it reads SKDPFQDMPK…KKFNQGKIFK (160 aa).

In terms of assembly, EF-1 is composed of four subunits: alpha, beta, delta, and gamma. AMPylated by fic-1.

Its function is as follows. Probably plays a role in anchoring the complex to other cellular components. This Caenorhabditis elegans protein is Probable elongation factor 1-gamma.